A 725-amino-acid polypeptide reads, in one-letter code: 1,4-alpha-glucan branching enzyme GlgB (725 aa).

Residue D403 is the Nucleophile of the active site. E456 (proton donor) is an active-site residue.

Belongs to the glycosyl hydrolase 13 family. GlgB subfamily. In terms of assembly, monomer.

It carries out the reaction Transfers a segment of a (1-&gt;4)-alpha-D-glucan chain to a primary hydroxy group in a similar glucan chain.. It participates in glycan biosynthesis; glycogen biosynthesis. In terms of biological role, catalyzes the formation of the alpha-1,6-glucosidic linkages in glycogen by scission of a 1,4-alpha-linked oligosaccharide from growing alpha-1,4-glucan chains and the subsequent attachment of the oligosaccharide to the alpha-1,6 position. In Pectobacterium atrosepticum (strain SCRI 1043 / ATCC BAA-672) (Erwinia carotovora subsp. atroseptica), this protein is 1,4-alpha-glucan branching enzyme GlgB.